Consider the following 583-residue polypeptide: Estrogen receptor (583 aa).

The tract at residues 1-138 is modulating; the sequence is MYPEESRGSG…GFEITKNTRF (138 aa). NR C4-type zinc fingers lie at residues 139 to 159 and 175 to 199; these read CAVCSDYASGYHYGVWSCEGC and CPATNQCTIDKNRRKSCQACRLRKC. Positions 139–204 form a DNA-binding region, nuclear receptor; that stretch reads CAVCSDYASG…RLRKCYEVGM (66 aa). The hinge stretch occupies residues 205–265; that stretch reads MKGGMRKDRG…PGGRSSLNNM (61 aa). Residues 220–263 are disordered; that stretch reads EKHGPAQRQTSQNLPTHKASPQDGRKRAMSSSSTSGPGGRSSLN. The region spanning 266–501 is the NR LBD domain; the sequence is PPDQVLLLLQ…DLLLEMLDAH (236 aa). The interval 506-583 is disordered; the sequence is PVKPSQSWSQ…GSHSDCTRIP (78 aa). Residues 539 to 551 show a composition bias toward low complexity; sequence ASSAGSSSGPQGS.

It belongs to the nuclear hormone receptor family. NR3 subfamily. Binds DNA as a homodimer. Can form a heterodimer with ER-beta.

The protein resides in the nucleus. In terms of biological role, the steroid hormones and their receptors are involved in the regulation of eukaryotic gene expression and affect cellular proliferation and differentiation in target tissues. In Oreochromis aureus (Israeli tilapia), this protein is Estrogen receptor (esr1).